We begin with the raw amino-acid sequence, 55 residues long: Myrmicitoxin(1)-Pr6b (55 aa).

Positions 1–22 (MKIIYAFLLIAVVAFMGSGIMA) are cleaved as a signal peptide. The propeptide occupies 23–29 (ESLAEAI).

Belongs to the formicidae venom clade 4 family. As to expression, expressed by the venom gland.

Its subcellular location is the secreted. Its function is as follows. Probable neurotoxin. The protein is Myrmicitoxin(1)-Pr6b of Pogonomyrmex rugosus (Desert harvester ant).